A 157-amino-acid polypeptide reads, in one-letter code: Ribosomal RNA large subunit methyltransferase H (157 aa).

S-adenosyl-L-methionine-binding positions include L73, G105, and 124–129 (LSKMTF).

It belongs to the RNA methyltransferase RlmH family. As to quaternary structure, homodimer.

The protein resides in the cytoplasm. It catalyses the reaction pseudouridine(1915) in 23S rRNA + S-adenosyl-L-methionine = N(3)-methylpseudouridine(1915) in 23S rRNA + S-adenosyl-L-homocysteine + H(+). Functionally, specifically methylates the pseudouridine at position 1915 (m3Psi1915) in 23S rRNA. The polypeptide is Ribosomal RNA large subunit methyltransferase H (Parabacteroides distasonis (strain ATCC 8503 / DSM 20701 / CIP 104284 / JCM 5825 / NCTC 11152)).